Reading from the N-terminus, the 352-residue chain is PhoH-like protein (352 aa).

The segment at 1–21 (MTSRETRAADAAGARQADAQV) is disordered. Over residues 9–20 (ADAAGARQADAQ) the composition is skewed to low complexity. An ATP-binding site is contributed by 150–157 (GPAGTGKT).

This sequence belongs to the PhoH family.

It is found in the cytoplasm. This chain is PhoH-like protein, found in Mycobacterium bovis (strain ATCC BAA-935 / AF2122/97).